The primary structure comprises 109 residues: Flagellar hook-basal body complex protein FliE (109 aa).

Residues 1-38 (MQAIHNDKSLLSPFSELNTDNRTQREESGSTFKEQKGG) form a disordered region. Basic and acidic residues predominate over residues 22 to 38 (RTQREESGSTFKEQKGG).

Belongs to the FliE family.

It is found in the bacterial flagellum basal body. The protein is Flagellar hook-basal body complex protein FliE of Helicobacter acinonychis (strain Sheeba).